The primary structure comprises 1469 residues: ABC transporter G family member 36 (1469 aa).

M1 is subject to N-acetylmethionine. Phosphoserine is present on residues S37, S38, and S40. At T43 the chain carries Phosphothreonine. Position 45 is a phosphoserine (S45). In terms of domain architecture, ABC transporter 1 spans 171 to 444; that stretch reads LGMIGIQFAK…FESFGFKCPE (274 aa). 204 to 211 provides a ligand contact to ATP; the sequence is GPPSSGKT. The region spanning 522–735 is the ABC transmembrane type-2 1 domain; sequence ELLKSCWDKE…AFNGLVVNEM (214 aa). Transmembrane regions (helical) follow at residues 540-560, 575-595, 621-641, 659-679, 685-705, 713-733, and 772-792; these read FFYVFKTVQIVIIAAITSTLF, LYIGALLFGMIINMFNGFAEM, LPTFLLGIPSSILESTAWMVV, FLLVFLIQQMAASLFRLIASV, IANTGGALTLLLVFLLGGFLL, WWGWAYWVSPLTYAFNGLVVN, and ISVGALLCFTALFNILFTLAL. The tract at residues 806–852 is disordered; the sequence is PEEENEDADQGKDPMRRSLSTADGNRRGEVAMGRMSRDSAAEASGGA. Residues S825, S841, and S844 each carry the phosphoserine modification. The span at 829–845 shows a compositional bias: basic and acidic residues; that stretch reads GNRRGEVAMGRMSRDSA. Residues 867–1119 form the ABC transporter 2 domain; sequence MSFDDVKYFV…KVVEYFESFP (253 aa). 912-919 is a binding site for ATP; that stretch reads GVSGAGKT. Residues 1192–1406 enclose the ABC transmembrane type-2 2 domain; it reads GQFKSCLWKQ…TVYGLIVSQY (215 aa). A run of 7 helical transmembrane segments spans residues 1216-1236, 1239-1259, 1299-1319, 1326-1346, 1356-1376, 1384-1404, and 1441-1461; these read FIFTLATSLLIGTVFWQIGGN, NAGDLTMVIGALYAAIIFVGI, LPYVLIQTVYYSLIVYAMVGF, FFWFVFVSYFSFLYWTYYGMM, VASIFASAFYGIFNLFSGFFI, WWIWYYWICPVAWTVYGLIVS, and PVAAVLIAFTVFFAFIFAFCI.

It belongs to the ABC transporter superfamily. ABCG family. PDR (TC 3.A.1.205) subfamily. Interacts, in a Ca(2+)-dependent manner, with calmodulins CaM3, CaM7 and several CaM-like proteins (CML8, CML9, CML12/CAL4, CML37 and CML38), as well as with calcium regulated proteins CBL4/SOS3 and KIC. Post-translationally, phosphorylated upon perception of pathogen-associated molecular patterns (PAMPs); phosphorylations at Ser-40 and Ser-45, which likely regulate transport activity, are required for plant defense against pathogens (e.g. Blumeria graminis), but dispensable for recruitment to the host-pathogen interface and penetration sites. Phosphorylation at Ser-841 seems to be required for protein stability. In terms of tissue distribution, ubiquitous (at protein level). Higher levels in root hairs, stomata, epidermal cells, and hydathodes. Concentrated at the infection site of infected plants, including papillae and haustoria. Accumulates at the periphery of lateral root cap and root epidermal cells, especially in the outer lateral membrane domain facing the environment.

Its subcellular location is the cell membrane. It localises to the golgi apparatus. It is found in the trans-Golgi network membrane. The protein localises to the endoplasmic reticulum membrane. In terms of biological role, together with ABCG37, regulates auxin homeostasis and responses by playing a dual role in coumarin (e.g. esculin) and in the auxin precursor indole 3-butyric acid (IBA) efflux transport, thus influencing cotyledons, roots and root hairs development. Mediates the transport (export into the apoplast) of distinct indole-type metabolites in distinct biological processes; a precursor of 4-O-beta-D-glucosyl-indol-3-yl formamide (4OGlcI3F), a pathogen-inducible tryptophan-derived compound (e.g. upon Blumeria graminis conidiospore inoculation), being a probable substrate in extracellular pathogen defense. Involved in the cellular detoxification of xenobiotics by promoting the excretion of some auxinic herbicides including 4-(2,4-dichlorophenoxy)butyric acid (2,4-DB) and other members of the phenoxyalkanoic acid family but not 2,4-dichlorophenoxyacetic acid (2,4-D). Mediates thymidine exudation in the rhizosphere. May be a transporter of lignin precursors during tracheary element differentiation. Key factor that controls the extent of cell death in the defense response. Necessary for both callose deposition and glucosinolate activation in response to pathogens. As a central component of nonhost resistance (NHR), required for limiting invasion by nonadapted pathogens including powdery mildews (e.g. Blumeria graminis and Erysiphe pisi), root-penetrating pathogenic fungi (e.g. Fusarium oxysporum), Phakopsora pachyrhizi and Colletotrichum gloeosporioides (anthracnose fungi), probably by sensing Ca(2+) via interactions with calmodulins (e.g. CaM7). Confers resistance to cadmium (Cd) and lead (Pb), probably as an efflux pump of Cd2+ or Cd conjugates, and possibly, of chemicals that mediate pathogen resistance. Promotes resistance to abiotic stresses (e.g. drought and salt stress) and favors general growth by preventing sodium accumulation in plants. Required for microbe-associated molecular patterns (MAMPs)- and salicylic acid (SA)-dependent hypersensitive cell death (HR), involving indole glucosinolate breakdown products (e.g. indole-3-acetonitrile), probably in a PEN2 myrosinase-dependent metabolic pathway, triggered by the recognition of effectors from incompatible pathogens including oomycetes and bacteria (e.g. AvrRpm1 and AvrRps4) and benzothiadiazole- (BTH), and leading to an induced protection against pathogens (e.g. Pseudomonas syringae pv. tomato DC3000, Golovinomyces orontii and Hyaloperonospora arabidopsidis). The chain is ABC transporter G family member 36 from Arabidopsis thaliana (Mouse-ear cress).